A 349-amino-acid polypeptide reads, in one-letter code: UPF0284 protein MA_3887 (349 aa).

The protein belongs to the UPF0284 family.

The chain is UPF0284 protein MA_3887 from Methanosarcina acetivorans (strain ATCC 35395 / DSM 2834 / JCM 12185 / C2A).